The chain runs to 35 residues: Natriuretic peptide TNPa (35 aa).

Cysteines 9 and 25 form a disulfide.

Expressed by the venom gland.

Its subcellular location is the secreted. Functionally, snake venom natriuretic peptide that exhibits vasoactive and probable hypotensive activity. Is only weakly active on natriuretic peptide receptor-C (NPR3). Stimulates cGMP production through the natriuretic peptide receptor 1 (NPR1) with moderate potencies for the rat NPR1 (EC(50)=2020 nM), and very weak potencies over human NPR1 (15% activation at 10 uM). In vivo, does not impact systolic and diastolic blood pressure, as well as heart rate, when intravenously injected in conscious rabbits. Does not affect the bradycardia due to cardiac afferent stimulation (Bezold-Jarisch reflex). This Oxyuranus microlepidotus (Inland taipan) protein is Natriuretic peptide TNPa.